Here is a 78-residue protein sequence, read N- to C-terminus: Small ribosomal subunit protein bS18 (78 aa).

It belongs to the bacterial ribosomal protein bS18 family. In terms of assembly, part of the 30S ribosomal subunit. Forms a tight heterodimer with protein bS6.

Functionally, binds as a heterodimer with protein bS6 to the central domain of the 16S rRNA, where it helps stabilize the platform of the 30S subunit. The polypeptide is Small ribosomal subunit protein bS18 (Thermobifida fusca (strain YX)).